We begin with the raw amino-acid sequence, 457 residues long: tRNA modification GTPase MnmE (457 aa).

Positions 24, 81, and 124 each coordinate (6S)-5-formyl-5,6,7,8-tetrahydrofolate. One can recognise a TrmE-type G domain in the interval 220 to 379 (GIQLVLAGAP…LKQKILHVVG (160 aa)). Asn230 provides a ligand contact to K(+). GTP-binding positions include 230–235 (NVGKSS), 249–255 (TPIAGTT), and 274–277 (DTAG). A Mg(2+)-binding site is contributed by Ser234. 3 residues coordinate K(+): Thr249, Ile251, and Thr254. Thr255 lines the Mg(2+) pocket. A (6S)-5-formyl-5,6,7,8-tetrahydrofolate-binding site is contributed by Lys457.

Belongs to the TRAFAC class TrmE-Era-EngA-EngB-Septin-like GTPase superfamily. TrmE GTPase family. Homodimer. Heterotetramer of two MnmE and two MnmG subunits. The cofactor is K(+).

Its subcellular location is the cytoplasm. Exhibits a very high intrinsic GTPase hydrolysis rate. Involved in the addition of a carboxymethylaminomethyl (cmnm) group at the wobble position (U34) of certain tRNAs, forming tRNA-cmnm(5)s(2)U34. This is tRNA modification GTPase MnmE from Polynucleobacter asymbioticus (strain DSM 18221 / CIP 109841 / QLW-P1DMWA-1) (Polynucleobacter necessarius subsp. asymbioticus).